Here is a 188-residue protein sequence, read N- to C-terminus: dCTP deaminase (188 aa).

Residues 111–116 (KSTYAR), 135–137 (TLE), Gln-156, Tyr-170, and Gln-180 each bind dCTP. The active-site Proton donor/acceptor is the Glu-137.

It belongs to the dCTP deaminase family. As to quaternary structure, homotrimer.

It carries out the reaction dCTP + H2O + H(+) = dUTP + NH4(+). The protein operates within pyrimidine metabolism; dUMP biosynthesis; dUMP from dCTP (dUTP route): step 1/2. Its function is as follows. Catalyzes the deamination of dCTP to dUTP. This Methylococcus capsulatus (strain ATCC 33009 / NCIMB 11132 / Bath) protein is dCTP deaminase.